We begin with the raw amino-acid sequence, 543 residues long: MDAFTGSGLKRKFDDVDVGSSVSNSDDEISSSDSADSCDSLNPPTTASFTPTSILKRQKQLRRKNVRFDQVTVYYFARRQGFTSVPSQGGSSLGMAQRHNSVRSYTLCEFAQEQEVNHREILREHLKEEKLHAKKMKLTKNGTVESVEADGLTLDDVSDEDIDVENVEVDDYFFLQPLPTKRRRALLRASGVHRIDAEEKQELRAIRLSREECGCDCRLYCDPEACACSQAGIKCQVDRMSFPCGCSRDGCGNMAGRIEFNPIRVRTHYLHTIMKLELESKRQVSRPAAPDEEPSPTASCSLTGAQGSETQDFQEFIAENETAVMHLQSAEELERLKAEEDSSGSSASLDSSIESLGVCILEEPLAVPEELCPGLTAPILIQAQLPPGSSVLCFTENSDHPTASTVNSPSYLNSGPLVYYQVEQRPVLGVKGEPGTEEGSASFPKEKDLNVFSLPVTSLVACSSTDPAALCKSEVGKTPTLEALLPEDCNPEEPENEDFHPSWSPSSLPFRTDNEEGCGMVKTSQQNEDRPPEDSSLELPLAV.

M1 carries the N-acetylmethionine modification. Disordered stretches follow at residues M1–P51, K281–A305, and D488–V543. Positions S31 to S40 are enriched in low complexity. 2 stretches are compositionally biased toward polar residues: residues N42–P51 and P296–A305.

Belongs to the AXUD1 family.

It is found in the nucleus. In terms of biological role, binds to the consensus sequence 5'-AGAGTG-3' and has transcriptional activator activity. May play a role in apoptosis. This Homo sapiens (Human) protein is Cysteine/serine-rich nuclear protein 2 (CSRNP2).